A 504-amino-acid chain; its full sequence is Maturase K (504 aa).

Belongs to the intron maturase 2 family. MatK subfamily.

Its subcellular location is the plastid. It is found in the chloroplast. In terms of biological role, usually encoded in the trnK tRNA gene intron. Probably assists in splicing its own and other chloroplast group II introns. This is Maturase K from Bombax buonopozense (Red-flowered silk cotton tree).